The following is a 150-amino-acid chain: 3-hydroxyacyl-[acyl-carrier-protein] dehydratase FabZ (150 aa).

Histidine 54 is an active-site residue.

The protein belongs to the thioester dehydratase family. FabZ subfamily.

Its subcellular location is the cytoplasm. The enzyme catalyses a (3R)-hydroxyacyl-[ACP] = a (2E)-enoyl-[ACP] + H2O. Functionally, involved in unsaturated fatty acids biosynthesis. Catalyzes the dehydration of short chain beta-hydroxyacyl-ACPs and long chain saturated and unsaturated beta-hydroxyacyl-ACPs. The chain is 3-hydroxyacyl-[acyl-carrier-protein] dehydratase FabZ from Vibrio parahaemolyticus serotype O3:K6 (strain RIMD 2210633).